Reading from the N-terminus, the 213-residue chain is MGCFITFEGVEGCGKTTQIKLLAQHLTEQGHTVIVTREPGGCPIADQARAILLDADNRAMTPTTELLLYAAARAQHVQEIVKPALAANKVVLCDRFTDATIAYQGYGRGLDPATIAYLNDLATDGLKPRLTVLLDCPVEVGLKRAFDRINGAAGAREERFELESVLFHRKVRDGYLKLAEDEPERFIIIDGSQGVQETEAAITAAVLARLAEG.

9-16 serves as a coordination point for ATP; it reads GVEGCGKT.

Belongs to the thymidylate kinase family.

The catalysed reaction is dTMP + ATP = dTDP + ADP. Functionally, phosphorylation of dTMP to form dTDP in both de novo and salvage pathways of dTTP synthesis. This is Thymidylate kinase from Geotalea uraniireducens (strain Rf4) (Geobacter uraniireducens).